The chain runs to 807 residues: Microbial collagenase (807 aa).

The signal sequence occupies residues 1–27 (MSHLLPFPRRRLALACLLASISGASFG). His434 lines the Zn(2+) pocket. Glu435 is a catalytic residue. A Zn(2+)-binding site is contributed by His438. Residues 562 to 585 (EVTPENPDTDPDTPTEPSDGVTQL) form a disordered region.

Belongs to the peptidase M9A family. The cofactor is Zn(2+).

Its subcellular location is the secreted. It carries out the reaction Digestion of native collagen in the triple helical region at Xaa-|-Gly bonds. With synthetic peptides, a preference is shown for Gly at P3 and P1', Pro and Ala at P2 and P2', and hydroxyproline, Ala or Arg at P3'.. In terms of biological role, possesses gelatinolytic activity. The chain is Microbial collagenase from Vibrio vulnificus (strain CMCP6).